The sequence spans 433 residues: Elongation factor 1-alpha (433 aa).

One can recognise a tr-type G domain in the interval Lys5–Leu220. The interval Gly14–Ser21 is G1. Gly14–Ser21 contributes to the GTP binding site. Ser21 is a Mg(2+) binding site. A G2 region spans residues Gly70–Asp74. Residues Asp91–Gly94 form a G3 region. GTP-binding positions include Asp91–His95 and Asn146–Asp149. The interval Asn146–Asp149 is G4. Residues Ala186 to Phe188 are G5.

This sequence belongs to the TRAFAC class translation factor GTPase superfamily. Classic translation factor GTPase family. EF-Tu/EF-1A subfamily.

The protein localises to the cytoplasm. It catalyses the reaction GTP + H2O = GDP + phosphate + H(+). Its function is as follows. GTP hydrolase that promotes the GTP-dependent binding of aminoacyl-tRNA to the A-site of ribosomes during protein biosynthesis. In Nanoarchaeum equitans (strain Kin4-M), this protein is Elongation factor 1-alpha.